The chain runs to 61 residues: Large ribosomal subunit protein uL30 (61 aa).

Belongs to the universal ribosomal protein uL30 family. As to quaternary structure, part of the 50S ribosomal subunit.

This chain is Large ribosomal subunit protein uL30, found in Chlorobium phaeobacteroides (strain DSM 266 / SMG 266 / 2430).